Here is a 352-residue protein sequence, read N- to C-terminus: Nicotinate-nucleotide--dimethylbenzimidazole phosphoribosyltransferase (352 aa).

Catalysis depends on Glu318, which acts as the Proton acceptor.

Belongs to the CobT family.

It catalyses the reaction 5,6-dimethylbenzimidazole + nicotinate beta-D-ribonucleotide = alpha-ribazole 5'-phosphate + nicotinate + H(+). Its pathway is nucleoside biosynthesis; alpha-ribazole biosynthesis; alpha-ribazole from 5,6-dimethylbenzimidazole: step 1/2. In terms of biological role, catalyzes the synthesis of alpha-ribazole-5'-phosphate from nicotinate mononucleotide (NAMN) and 5,6-dimethylbenzimidazole (DMB). This chain is Nicotinate-nucleotide--dimethylbenzimidazole phosphoribosyltransferase, found in Geotalea uraniireducens (strain Rf4) (Geobacter uraniireducens).